The following is a 414-amino-acid chain: Cyclohex-1-ene-1-carbonyl-CoA dehydrogenase (414 aa).

Aspartate 124 serves as the catalytic Proton acceptor. Positions 157, 158, 164, and 190 each coordinate FAD. Serine 164 provides a ligand contact to cyclohex-1-ene-1-carbonyl-CoA. Serine 164 is a cyclohexa-1,5-diene-1-carbonyl-CoA binding site. Cyclohex-1-ene-1-carbonyl-CoA contacts are provided by lysine 211, arginine 275, and threonine 396. Cyclohexa-1,5-diene-1-carbonyl-CoA contacts are provided by lysine 211, arginine 275, and threonine 396. Threonine 398 and glutamine 400 together coordinate FAD. Position 408 (arginine 408) interacts with cyclohex-1-ene-1-carbonyl-CoA. Residue arginine 408 participates in cyclohexa-1,5-diene-1-carbonyl-CoA binding.

It belongs to the acyl-CoA dehydrogenase family. As to quaternary structure, homotetramer. Requires FAD as cofactor.

The catalysed reaction is cyclohex-1-ene-1-carbonyl-CoA + oxidized [electron-transfer flavoprotein] + H(+) = cyclohexa-1,5-diene-1-carbonyl-CoA + reduced [electron-transfer flavoprotein]. Mediates the conversion of cyclohex-1-ene-1-carbonyl-CoA (Ch1CoA) into (E)-2-cyclohex-1,5-diene-1-carbonyl-CoA in biosynthesis of cyclohexane-1-carboxylate, a by-product produced during fermentation of benzoate and crotonate to acetate. Also able to further convert (E)-2-cyclohex-1,5-diene-1-carbonyl-CoA to benzoyl-CoA. The protein is Cyclohex-1-ene-1-carbonyl-CoA dehydrogenase of Syntrophus aciditrophicus (strain SB).